The sequence spans 739 residues: Nucleoprotein (739 aa).

The stretch at 334-363 (VNVGEQYQQLREAATEAEKQLQQYAESREL) forms a coiled coil. Positions 415 to 646 (PKTSGHYDDD…QDSDNTQPEH (232 aa)) are disordered. 2 stretches are compositionally biased toward low complexity: residues 449 to 458 (SQDTTIPDVV) and 504 to 514 (KGGQQKNSQKG). The span at 520–530 (RQTQSRPTQNV) shows a compositional bias: polar residues. The span at 567–579 (EEADPLDDADDET) shows a compositional bias: acidic residues. Basic and acidic residues predominate over residues 611 to 638 (YRDHSEKRELPQDEQQDQDHTQEARNQD).

Belongs to the filoviruses nucleoprotein family. As to quaternary structure, homooligomer. Homomultimerizes to form the nucleocapsid. Binds to viral genomic RNA. Interacts with VP35 and VP30 to form the nucleocapsid. Interacts with host PPP2R5C; this interaction leads to VP30 dephosphorylation and viral transcription. Interacts with VP24; this interaction facilitates nucleocapsid assembly and genome packaging. Interacts with matrix protein VP40; this interaction allows recruitment of the nucleocapsid into progeny virions. Interacts with host STAU1. Interacts with host NXF1 (via RNA-binding domain); this interaction recruits NXF1 to the inclusion bodies were viral replication takes place, probably to export viral mRNA-NXF1 complexes from these sites. Interacts with host CCDC92; this interaction sequesters NP in the host cytoplasm. Interacts with host TRIM14. Post-translationally, phosphorylated and O-glycosylated by host. Acetylated by host EP300 in vitro.

It localises to the virion. It is found in the host cytoplasm. In terms of biological role, oligomerizes into helical capsid to encapsidate the viral genome, protecting it from nucleases and the cellular innate immune response. VP35 binds to and stabilizes monomeric NP, keeping it soluble. Upon virus replication, NP is recruited to bind cooperatively viral genomic RNA and VP35 is released. The encapsidated genomic RNA is termed the nucleocapsid and serves as template for transcription and replication. The nucleocapsid is helical with a pitch of 10.81 NP per turn and a diameter of about 22nm. Each NP binds to six nucleotides of viral genomic RNA, three being exposed to the solvant and three hidden into the nucleocapsid. Also recruits host PPP2R5C phosphatase to dephosphorylate VP30 and thereby promote viral transcription. Upon virion assembly and budding, NP binds to VP24 and possibly host STAU1. The sequence is that of Nucleoprotein (NP) from Epomops franqueti (Franquet's epauletted fruit bat).